The chain runs to 268 residues: Large ribosomal subunit protein uL4 (268 aa).

It belongs to the universal ribosomal protein uL4 family. In terms of assembly, part of the 50S ribosomal subunit.

Its function is as follows. One of the primary rRNA binding proteins, this protein initially binds near the 5'-end of the 23S rRNA. It is important during the early stages of 50S assembly. It makes multiple contacts with different domains of the 23S rRNA in the assembled 50S subunit and ribosome. Forms part of the polypeptide exit tunnel. The polypeptide is Large ribosomal subunit protein uL4 (Nanoarchaeum equitans (strain Kin4-M)).